Consider the following 197-residue polypeptide: MDFVKALLDKKLLLIGNFMLTSGKVSPYYLDLRKLPNHPDIFSFVVSSAVDIVKGINFDMILGVVTGGVPFASFIACKLNKPMGYIRAEKKGHGTERLLEADVDGKKVIVVDDVATTGGSILKAVEEVRKAGGKVEHALVIVDREEGAFEKLESVGIRLLSVYKVSEILNSLIKSNLVAENEKKLISDYMVKNIGKS.

5-phospho-alpha-D-ribose 1-diphosphate is bound by residues Arg87, Lys91, His93, and 112–120 (DDVATTGGS). Orotate-binding residues include Thr116 and Arg144.

Belongs to the purine/pyrimidine phosphoribosyltransferase family. PyrE subfamily. In terms of assembly, homodimer. Mg(2+) serves as cofactor.

It carries out the reaction orotidine 5'-phosphate + diphosphate = orotate + 5-phospho-alpha-D-ribose 1-diphosphate. It functions in the pathway pyrimidine metabolism; UMP biosynthesis via de novo pathway; UMP from orotate: step 1/2. Functionally, catalyzes the transfer of a ribosyl phosphate group from 5-phosphoribose 1-diphosphate to orotate, leading to the formation of orotidine monophosphate (OMP). This chain is Orotate phosphoribosyltransferase, found in Sulfolobus acidocaldarius (strain ATCC 33909 / DSM 639 / JCM 8929 / NBRC 15157 / NCIMB 11770).